Here is a 287-residue protein sequence, read N- to C-terminus: ATP synthase subunit a (287 aa).

The next 6 membrane-spanning stretches (helical) occupy residues 37–57 (LDSV…MWLA), 96–116 (FIAP…AMDL), 144–164 (DLST…VYSI), 187–207 (PVFA…EYVA), 224–244 (ELVF…LSGV), and 266–286 (TLQA…AHEA).

The protein belongs to the ATPase A chain family. As to quaternary structure, F-type ATPases have 2 components, CF(1) - the catalytic core - and CF(0) - the membrane proton channel. CF(1) has five subunits: alpha(3), beta(3), gamma(1), delta(1), epsilon(1). CF(0) has three main subunits: a(1), b(2) and c(9-12). The alpha and beta chains form an alternating ring which encloses part of the gamma chain. CF(1) is attached to CF(0) by a central stalk formed by the gamma and epsilon chains, while a peripheral stalk is formed by the delta and b chains.

Its subcellular location is the cell inner membrane. Functionally, key component of the proton channel; it plays a direct role in the translocation of protons across the membrane. The protein is ATP synthase subunit a of Acidovorax ebreus (strain TPSY) (Diaphorobacter sp. (strain TPSY)).